A 479-amino-acid polypeptide reads, in one-letter code: UDP-N-acetylmuramate--L-alanine ligase (479 aa).

126 to 132 (GTHGKTT) lines the ATP pocket.

It belongs to the MurCDEF family.

Its subcellular location is the cytoplasm. The catalysed reaction is UDP-N-acetyl-alpha-D-muramate + L-alanine + ATP = UDP-N-acetyl-alpha-D-muramoyl-L-alanine + ADP + phosphate + H(+). It participates in cell wall biogenesis; peptidoglycan biosynthesis. Cell wall formation. The polypeptide is UDP-N-acetylmuramate--L-alanine ligase (Alkalilimnicola ehrlichii (strain ATCC BAA-1101 / DSM 17681 / MLHE-1)).